A 201-amino-acid chain; its full sequence is Recombination protein RecR (201 aa).

The segment at 60–75 adopts a C4-type zinc-finger fold; that stretch reads CSCCGNVDTIDPCTVC. Residues 83–178 form the Toprim domain; the sequence is AVIIVVEDVA…RITRLAHGVP (96 aa).

It belongs to the RecR family.

May play a role in DNA repair. It seems to be involved in an RecBC-independent recombinational process of DNA repair. It may act with RecF and RecO. The sequence is that of Recombination protein RecR from Rhizobium meliloti (strain 1021) (Ensifer meliloti).